The chain runs to 219 residues: UPF0502 protein HCH_06091 (219 aa).

This sequence belongs to the UPF0502 family.

The chain is UPF0502 protein HCH_06091 from Hahella chejuensis (strain KCTC 2396).